The following is a 191-amino-acid chain: Protein RER1 homolog (191 aa).

3 consecutive transmembrane segments (helical) span residues 35–55 (AFRW…IILL), 57–77 (GFYI…LLFL), and 135–155 (FFDV…LTFL).

The protein belongs to the RER1 family.

Its subcellular location is the membrane. In terms of biological role, may be involved in protein transport along the secretory pathway. The protein is Protein RER1 homolog (rer-1) of Caenorhabditis elegans.